The sequence spans 189 residues: Probable nicotinate-nucleotide adenylyltransferase (189 aa).

The protein belongs to the NadD family.

The enzyme catalyses nicotinate beta-D-ribonucleotide + ATP + H(+) = deamido-NAD(+) + diphosphate. It participates in cofactor biosynthesis; NAD(+) biosynthesis; deamido-NAD(+) from nicotinate D-ribonucleotide: step 1/1. Catalyzes the reversible adenylation of nicotinate mononucleotide (NaMN) to nicotinic acid adenine dinucleotide (NaAD). The polypeptide is Probable nicotinate-nucleotide adenylyltransferase (Bacillus pumilus (strain SAFR-032)).